The sequence spans 352 residues: Holliday junction branch migration complex subunit RuvB (352 aa).

The tract at residues 1-42 (MAIVSSSAGRADSQPPAAKSRVVDASPLPEEASPAREDGLRP) is disordered. The tract at residues 13 to 201 (SQPPAAKSRV…FGLIQRLEFY (189 aa)) is large ATPase domain (RuvB-L). Basic and acidic residues predominate over residues 33–42 (SPAREDGLRP). Leu-40, Arg-41, Gly-82, Lys-85, Thr-86, Thr-87, Arg-191, Tyr-201, and Arg-238 together coordinate ATP. Thr-86 serves as a coordination point for Mg(2+). The tract at residues 202–273 (GLEDLQAIVE…LVDEALTLHR (72 aa)) is small ATPAse domain (RuvB-S). A head domain (RuvB-H) region spans residues 276–352 (ARGLDASDRR…RRHLGWPELP (77 aa)). Positions 331 and 336 each coordinate DNA.

This sequence belongs to the RuvB family. As to quaternary structure, homohexamer. Forms an RuvA(8)-RuvB(12)-Holliday junction (HJ) complex. HJ DNA is sandwiched between 2 RuvA tetramers; dsDNA enters through RuvA and exits via RuvB. An RuvB hexamer assembles on each DNA strand where it exits the tetramer. Each RuvB hexamer is contacted by two RuvA subunits (via domain III) on 2 adjacent RuvB subunits; this complex drives branch migration. In the full resolvosome a probable DNA-RuvA(4)-RuvB(12)-RuvC(2) complex forms which resolves the HJ.

Its subcellular location is the cytoplasm. It carries out the reaction ATP + H2O = ADP + phosphate + H(+). The RuvA-RuvB-RuvC complex processes Holliday junction (HJ) DNA during genetic recombination and DNA repair, while the RuvA-RuvB complex plays an important role in the rescue of blocked DNA replication forks via replication fork reversal (RFR). RuvA specifically binds to HJ cruciform DNA, conferring on it an open structure. The RuvB hexamer acts as an ATP-dependent pump, pulling dsDNA into and through the RuvAB complex. RuvB forms 2 homohexamers on either side of HJ DNA bound by 1 or 2 RuvA tetramers; 4 subunits per hexamer contact DNA at a time. Coordinated motions by a converter formed by DNA-disengaged RuvB subunits stimulates ATP hydrolysis and nucleotide exchange. Immobilization of the converter enables RuvB to convert the ATP-contained energy into a lever motion, pulling 2 nucleotides of DNA out of the RuvA tetramer per ATP hydrolyzed, thus driving DNA branch migration. The RuvB motors rotate together with the DNA substrate, which together with the progressing nucleotide cycle form the mechanistic basis for DNA recombination by continuous HJ branch migration. Branch migration allows RuvC to scan DNA until it finds its consensus sequence, where it cleaves and resolves cruciform DNA. The polypeptide is Holliday junction branch migration complex subunit RuvB (Prochlorococcus marinus (strain MIT 9303)).